The primary structure comprises 396 residues: Exodeoxyribonuclease 7 large subunit (396 aa).

The protein belongs to the XseA family. Heterooligomer composed of large and small subunits.

The protein resides in the cytoplasm. It carries out the reaction Exonucleolytic cleavage in either 5'- to 3'- or 3'- to 5'-direction to yield nucleoside 5'-phosphates.. Bidirectionally degrades single-stranded DNA into large acid-insoluble oligonucleotides, which are then degraded further into small acid-soluble oligonucleotides. The polypeptide is Exodeoxyribonuclease 7 large subunit (Clostridium tetani (strain Massachusetts / E88)).